The primary structure comprises 224 residues: UPF0441 protein PC1_0312 (224 aa).

A disordered region spans residues 178 to 224; that stretch reads PKTALAPKPATTSTITRGGFGETVAKQNSMQRSSASSSSSSSRSMGG. Residues 209 to 224 are compositionally biased toward low complexity; that stretch reads RSSASSSSSSSRSMGG.

It belongs to the UPF0441 family.

This is UPF0441 protein PC1_0312 from Pectobacterium carotovorum subsp. carotovorum (strain PC1).